The chain runs to 600 residues: Jacalin-related lectin 18 (600 aa).

Jacalin-type lectin domains follow at residues 12–158 (TQRL…YFTC), 161–303 (PTRM…YFTT), 304–447 (SPFI…YFRL), and 454–597 (GEKV…HVLP).

This sequence belongs to the jacalin lectin family.

The sequence is that of Jacalin-related lectin 18 (JAL18) from Arabidopsis thaliana (Mouse-ear cress).